Here is a 298-residue protein sequence, read N- to C-terminus: Glutamyl-Q tRNA(Asp) synthetase (298 aa).

L-glutamate is bound by residues 9 to 13 and E45; that span reads RFAPS. The 'HIGH' region motif lies at 12–22; that stretch reads PSPSGELHFGS. Residues C101, C103, Y115, and C119 each coordinate Zn(2+). Positions 172 and 190 each coordinate L-glutamate. Positions 228–232 match the 'KMSKS' region motif; sequence KLSKQ. K231 contributes to the ATP binding site.

This sequence belongs to the class-I aminoacyl-tRNA synthetase family. GluQ subfamily. Zn(2+) is required as a cofactor.

Functionally, catalyzes the tRNA-independent activation of glutamate in presence of ATP and the subsequent transfer of glutamate onto a tRNA(Asp). Glutamate is transferred on the 2-amino-5-(4,5-dihydroxy-2-cyclopenten-1-yl) moiety of the queuosine in the wobble position of the QUC anticodon. The sequence is that of Glutamyl-Q tRNA(Asp) synthetase from Salmonella paratyphi A (strain ATCC 9150 / SARB42).